An 82-amino-acid polypeptide reads, in one-letter code: RNA-binding protein Hfq (82 aa).

Residues 10–70 (DIFLNGARKN…LSTITPSKAI (61 aa)) enclose the Sm domain.

Belongs to the Hfq family. Homohexamer.

RNA chaperone that binds small regulatory RNA (sRNAs) and mRNAs to facilitate mRNA translational regulation in response to envelope stress, environmental stress and changes in metabolite concentrations. Also binds with high specificity to tRNAs. This is RNA-binding protein Hfq from Clostridium kluyveri (strain NBRC 12016).